The following is an 89-amino-acid chain: Small ribosomal subunit protein uS15 (89 aa).

The protein belongs to the universal ribosomal protein uS15 family. In terms of assembly, part of the 30S ribosomal subunit. Forms a bridge to the 50S subunit in the 70S ribosome, contacting the 23S rRNA.

One of the primary rRNA binding proteins, it binds directly to 16S rRNA where it helps nucleate assembly of the platform of the 30S subunit by binding and bridging several RNA helices of the 16S rRNA. In terms of biological role, forms an intersubunit bridge (bridge B4) with the 23S rRNA of the 50S subunit in the ribosome. This chain is Small ribosomal subunit protein uS15, found in Chlamydia caviae (strain ATCC VR-813 / DSM 19441 / 03DC25 / GPIC) (Chlamydophila caviae).